The chain runs to 428 residues: Glutamate-1-semialdehyde 2,1-aminomutase (428 aa).

Lysine 265 carries the N6-(pyridoxal phosphate)lysine modification.

This sequence belongs to the class-III pyridoxal-phosphate-dependent aminotransferase family. HemL subfamily. As to quaternary structure, homodimer. Requires pyridoxal 5'-phosphate as cofactor.

The protein resides in the cytoplasm. It catalyses the reaction (S)-4-amino-5-oxopentanoate = 5-aminolevulinate. The protein operates within porphyrin-containing compound metabolism; protoporphyrin-IX biosynthesis; 5-aminolevulinate from L-glutamyl-tRNA(Glu): step 2/2. This is Glutamate-1-semialdehyde 2,1-aminomutase from Aeromonas salmonicida (strain A449).